The primary structure comprises 376 residues: Chaperone protein DnaJ (376 aa).

The 66-residue stretch at 5-70 (DYYEVLGVGR…DKKAAYDQFG (66 aa)) folds into the J domain. The segment at 132–210 (GLTKELRIPT…CHGDGRVEKS (79 aa)) adopts a CR-type zinc-finger fold. Cys-145, Cys-148, Cys-162, Cys-165, Cys-184, Cys-187, Cys-198, and Cys-201 together coordinate Zn(2+). CXXCXGXG motif repeat units follow at residues 145–152 (CDLCDGSG), 162–169 (CTTCHGQG), 184–191 (CPTCHGRG), and 198–205 (CSKCHGDG).

The protein belongs to the DnaJ family. As to quaternary structure, homodimer. Zn(2+) is required as a cofactor.

Its subcellular location is the cytoplasm. Its function is as follows. Participates actively in the response to hyperosmotic and heat shock by preventing the aggregation of stress-denatured proteins and by disaggregating proteins, also in an autonomous, DnaK-independent fashion. Unfolded proteins bind initially to DnaJ; upon interaction with the DnaJ-bound protein, DnaK hydrolyzes its bound ATP, resulting in the formation of a stable complex. GrpE releases ADP from DnaK; ATP binding to DnaK triggers the release of the substrate protein, thus completing the reaction cycle. Several rounds of ATP-dependent interactions between DnaJ, DnaK and GrpE are required for fully efficient folding. Also involved, together with DnaK and GrpE, in the DNA replication of plasmids through activation of initiation proteins. The chain is Chaperone protein DnaJ from Shewanella sp. (strain W3-18-1).